The primary structure comprises 153 residues: UPF0260 protein YcgN (153 aa).

Belongs to the UPF0260 family.

The polypeptide is UPF0260 protein YcgN (Salmonella paratyphi B (strain ATCC BAA-1250 / SPB7)).